The following is a 258-amino-acid chain: Imidazole glycerol phosphate synthase subunit HisF (258 aa).

Active-site residues include Asp-11 and Asp-130.

It belongs to the HisA/HisF family. Heterodimer of HisH and HisF.

Its subcellular location is the cytoplasm. It carries out the reaction 5-[(5-phospho-1-deoxy-D-ribulos-1-ylimino)methylamino]-1-(5-phospho-beta-D-ribosyl)imidazole-4-carboxamide + L-glutamine = D-erythro-1-(imidazol-4-yl)glycerol 3-phosphate + 5-amino-1-(5-phospho-beta-D-ribosyl)imidazole-4-carboxamide + L-glutamate + H(+). Its pathway is amino-acid biosynthesis; L-histidine biosynthesis; L-histidine from 5-phospho-alpha-D-ribose 1-diphosphate: step 5/9. In terms of biological role, IGPS catalyzes the conversion of PRFAR and glutamine to IGP, AICAR and glutamate. The HisF subunit catalyzes the cyclization activity that produces IGP and AICAR from PRFAR using the ammonia provided by the HisH subunit. The sequence is that of Imidazole glycerol phosphate synthase subunit HisF from Methylobacterium nodulans (strain LMG 21967 / CNCM I-2342 / ORS 2060).